We begin with the raw amino-acid sequence, 187 residues long: Troponin I, slow skeletal muscle (187 aa).

Proline 2 is modified (N-acetylproline). An involved in binding TNC region spans residues 2 to 48; sequence PEVERKSKITASRKLMLKSLMLAKAKECWEQEHEEREAEKVRYLSER. Serine 58 carries the post-translational modification Phosphoserine. The segment at 97–118 is involved in binding TNC and actin; sequence LKLKVLDLRGKFKRPPLRRVRV.

This sequence belongs to the troponin I family. In terms of assembly, binds to actin and tropomyosin.

Troponin I is the inhibitory subunit of troponin, the thin filament regulatory complex which confers calcium-sensitivity to striated muscle actomyosin ATPase activity. The sequence is that of Troponin I, slow skeletal muscle (Tnni1) from Mus musculus (Mouse).